We begin with the raw amino-acid sequence, 457 residues long: Subtilisin-like serine protease Pen c 2 (457 aa).

The N-terminal stretch at 1 to 16 (MKGFLGLALLPLLTAA) is a signal peptide. The propeptide at 17–136 (SPVSVESIHN…IEKDSEVHHF (120 aa)) is removed in mature form. In terms of domain architecture, Inhibitor I9 spans 43 to 134 (SYIVVFKKHV…DYIEKDSEVH (92 aa)). Residues 146-457 (PWGLARISHR…YTDIVAQGGY (312 aa)) form the Peptidase S8 domain. Residues aspartate 182 and histidine 214 each act as charge relay system in the active site. Asparagine 244 and asparagine 284 each carry an N-linked (GlcNAc...) asparagine glycan. The active-site Charge relay system is serine 380. A glycan (N-linked (GlcNAc...) asparagine) is linked at asparagine 447.

Belongs to the peptidase S8 family.

Functionally, serine protease. The polypeptide is Subtilisin-like serine protease Pen c 2 (Penicillium citrinum).